Reading from the N-terminus, the 64-residue chain is Toxin BmCa-1 (64 aa).

The first 18 residues, 1–18 (MNTFVVVFLLLTAILCHA), serve as a signal peptide directing secretion. Positions 19 to 27 (EHALDETAR) are excised as a propeptide. 3 cysteine pairs are disulfide-bonded: Cys29-Cys43, Cys36-Cys49, and Cys42-Cys58.

Belongs to the scorpion calcin-like family. Expressed by the venom gland.

The protein resides in the secreted. Functionally, may increase intracellular calcium release through the activation of nuclear inositol 1,4,5-trisphosphate receptors (ITPR) of cardiomyocytes, thereby causing an increase in the contraction frequency of these cells. This Olivierus martensii (Manchurian scorpion) protein is Toxin BmCa-1.